The sequence spans 136 residues: Histone H3.3 (136 aa).

A disordered region spans residues 1 to 42 (MARTKQTARKSTGGKAPRKQLASKAARKSAPVSGGVKKPHRY). Lys-5 carries the N6,N6,N6-trimethyllysine; alternate modification. At Lys-5 the chain carries N6,N6-dimethyllysine; alternate. 2 positions are modified to N6-methyllysine; alternate: Lys-5 and Lys-10. Lys-10 is modified (N6-acetyllysine; alternate). Ser-11 bears the Phosphoserine mark. Lys-15 is subject to N6,N6-dimethyllysine; alternate. 5 positions are modified to N6-acetyllysine; alternate: Lys-15, Lys-19, Lys-24, Lys-28, and Lys-37. Lys-19, Lys-24, Lys-28, and Lys-37 each carry N6-methyllysine; alternate. N6,N6,N6-trimethyllysine; alternate occurs at positions 28 and 37. N6,N6-dimethyllysine; alternate is present on residues Lys-28 and Lys-37. N6-acetyllysine is present on residues Lys-57 and Lys-65. Residue Lys-80 is modified to N6,N6,N6-trimethyllysine; alternate. At Lys-80 the chain carries N6,N6-dimethyllysine; alternate. At Lys-80 the chain carries N6-methyllysine; alternate.

It belongs to the histone H3 family. The nucleosome is a histone octamer containing two molecules each of H2A, H2B, H3 and H4 assembled in one H3-H4 heterotetramer and two H2A-H2B heterodimers. The octamer wraps approximately 147 bp of DNA. Post-translationally, phosphorylated by IPL1 to form H3S10ph. H3S10ph promotes subsequent H3K14ac formation and is required for transcriptional activation through TBP recruitment to the promoters. In terms of processing, mono-, di- and trimethylated by the COMPASS complex to form H3K4me1/2/3. H3K4me activates gene expression by regulating transcription elongation and plays a role in telomere length maintenance. H3K4me enrichment correlates with transcription levels, and occurs in a 5' to 3' gradient with H3K4me3 enrichment at the 5'-end of genes, shifting to H3K4me2 and then H3K4me1. Methylated by SET2 to form H3K36me. H3K36me represses gene expression. Methylated by DOT1 to form H3K79me. H3K79me is required for association of SIR proteins with telomeric regions and for telomeric silencing. The COMPASS-mediated formation of H3K4me2/3 and the DOT1-mediated formation of H3K79me require H2BK123ub1. Acetylation of histone H3 leads to transcriptional activation. H3K14ac formation by GCN5 is promoted by H3S10ph. H3K14ac can also be formed by ESA1. H3K56ac formation occurs predominantly in newly synthesized H3 molecules during G1, S and G2/M of the cell cycle and may be involved in DNA repair.

The protein resides in the nucleus. The protein localises to the chromosome. In terms of biological role, core component of nucleosome. Nucleosomes wrap and compact DNA into chromatin, limiting DNA accessibility to the cellular machineries which require DNA as a template. Histones thereby play a central role in transcription regulation, DNA repair, DNA replication and chromosomal stability. DNA accessibility is regulated via a complex set of post-translational modifications of histones, also called histone code, and nucleosome remodeling. The chain is Histone H3.3 (HHT3) from Candida albicans (strain SC5314 / ATCC MYA-2876) (Yeast).